We begin with the raw amino-acid sequence, 472 residues long: Phosphoglucosamine mutase (472 aa).

The active-site Phosphoserine intermediate is serine 123. Serine 123, aspartate 262, aspartate 264, and aspartate 266 together coordinate Mg(2+). Phosphoserine is present on serine 123.

The protein belongs to the phosphohexose mutase family. The cofactor is Mg(2+). In terms of processing, activated by phosphorylation.

The catalysed reaction is alpha-D-glucosamine 1-phosphate = D-glucosamine 6-phosphate. Catalyzes the conversion of glucosamine-6-phosphate to glucosamine-1-phosphate. In Synechococcus elongatus (strain ATCC 33912 / PCC 7942 / FACHB-805) (Anacystis nidulans R2), this protein is Phosphoglucosamine mutase.